A 507-amino-acid polypeptide reads, in one-letter code: GMP synthase [glutamine-hydrolyzing] (507 aa).

A Glutamine amidotransferase type-1 domain is found at 3–190 (KILVIDYGSQ…IQGICGLKGS (188 aa)). Cysteine 77 (nucleophile) is an active-site residue. Active-site residues include histidine 164 and glutamate 166. Residues 191 to 382 (WTLMDFVENK…LGLPREILYR (192 aa)) enclose the GMPS ATP-PPase domain. 218-224 (SGGVDSS) contacts ATP.

In terms of assembly, homodimer.

The catalysed reaction is XMP + L-glutamine + ATP + H2O = GMP + L-glutamate + AMP + diphosphate + 2 H(+). Its pathway is purine metabolism; GMP biosynthesis; GMP from XMP (L-Gln route): step 1/1. Catalyzes the synthesis of GMP from XMP. In Petrotoga mobilis (strain DSM 10674 / SJ95), this protein is GMP synthase [glutamine-hydrolyzing].